A 193-amino-acid chain; its full sequence is Thioredoxin M4, chloroplastic (193 aa).

The N-terminal 82 residues, 1 to 82 (MASLLDSVTV…RIACEAQDTT (82 aa)), are a transit peptide targeting the chloroplast. Residues 83 to 192 (AAAVEVPNLS…LEKTIERFLV (110 aa)) enclose the Thioredoxin domain. Active-site nucleophile residues include cysteine 116 and cysteine 119. An intrachain disulfide couples cysteine 116 to cysteine 119.

Belongs to the thioredoxin family. Plant M-type subfamily.

It is found in the plastid. It localises to the chloroplast stroma. Thiol-disulfide oxidoreductase involved in the redox regulation of enzyme of the oxidative pentose phosphate pathway. Under reducing conditions, inhibits the glucose-6-phosphate dehydrogenase. The polypeptide is Thioredoxin M4, chloroplastic (Arabidopsis thaliana (Mouse-ear cress)).